A 199-amino-acid polypeptide reads, in one-letter code: MQFEVKDLINKIKKDGLEEAERISNDIIFKAKKEAEEIVARAEEAVGALKAKSEKEINDYKRHALEASRQAIRDLIIGVEKNLKSLFENTLKDNVAEVFSDNDFLSELIIKITDSWIKEEKLVIQLNESDFSGLEQILRLKLGNKLKEGIEIKPFKGISKGFKIQKKNTGLQYDFSVETIADILFDYLNPRFKEVIKVV.

It belongs to the V-ATPase E subunit family.

In terms of biological role, produces ATP from ADP in the presence of a proton gradient across the membrane. In Borrelia garinii subsp. bavariensis (strain ATCC BAA-2496 / DSM 23469 / PBi) (Borreliella bavariensis), this protein is V-type ATP synthase subunit E.